The primary structure comprises 175 residues: Deoxyuridine 5'-triphosphate nucleotidohydrolase (175 aa).

Substrate is bound by residues 67–69 (RSG), Asn80, 84–86 (TVD), and Lys94. Residues 138–175 (RAEGGFGSTGGHAAVGADTNGQQGGNRYASVVSDRKGQ) are disordered.

The protein belongs to the dUTPase family. Mg(2+) is required as a cofactor.

It catalyses the reaction dUTP + H2O = dUMP + diphosphate + H(+). It participates in pyrimidine metabolism; dUMP biosynthesis; dUMP from dCTP (dUTP route): step 2/2. This enzyme is involved in nucleotide metabolism: it produces dUMP, the immediate precursor of thymidine nucleotides and it decreases the intracellular concentration of dUTP so that uracil cannot be incorporated into DNA. The sequence is that of Deoxyuridine 5'-triphosphate nucleotidohydrolase from Streptomyces avermitilis (strain ATCC 31267 / DSM 46492 / JCM 5070 / NBRC 14893 / NCIMB 12804 / NRRL 8165 / MA-4680).